The chain runs to 207 residues: Large ribosomal subunit protein uL4 (207 aa).

Residues 50–76 (AVKNRSAVSGGGRKPWKQKGTGRARQG) are disordered.

This sequence belongs to the universal ribosomal protein uL4 family. As to quaternary structure, part of the 50S ribosomal subunit.

In terms of biological role, one of the primary rRNA binding proteins, this protein initially binds near the 5'-end of the 23S rRNA. It is important during the early stages of 50S assembly. It makes multiple contacts with different domains of the 23S rRNA in the assembled 50S subunit and ribosome. Functionally, forms part of the polypeptide exit tunnel. The protein is Large ribosomal subunit protein uL4 of Staphylococcus aureus (strain JH9).